A 362-amino-acid chain; its full sequence is Chorismate synthase (362 aa).

Arg48 and Arg54 together coordinate NADP(+). FMN-binding positions include 125-127 (RSS), 238-239 (NA), Gly278, 293-297 (KPTSS), and Arg319.

This sequence belongs to the chorismate synthase family. As to quaternary structure, homotetramer. The cofactor is FMNH2.

The catalysed reaction is 5-O-(1-carboxyvinyl)-3-phosphoshikimate = chorismate + phosphate. It functions in the pathway metabolic intermediate biosynthesis; chorismate biosynthesis; chorismate from D-erythrose 4-phosphate and phosphoenolpyruvate: step 7/7. Catalyzes the anti-1,4-elimination of the C-3 phosphate and the C-6 proR hydrogen from 5-enolpyruvylshikimate-3-phosphate (EPSP) to yield chorismate, which is the branch point compound that serves as the starting substrate for the three terminal pathways of aromatic amino acid biosynthesis. This reaction introduces a second double bond into the aromatic ring system. The chain is Chorismate synthase from Psychromonas ingrahamii (strain DSM 17664 / CCUG 51855 / 37).